The following is a 443-amino-acid chain: MADCITIAPELSFKDQITELAAHLSRSLPNADNQVAVKEFVQGYEAQVDTEEGRGDVEDAKKKQVVKSIVDKFVELKGGLEAAKESEVESSHFLLQHVLSTTFDQASEEYAQAVKDVNEAVKKGAQETTKITRAEAASRVLKNTYNFLPSNSPIRPSTLLSLMSLLASTLDLSALPLPTSTLLPALSSWSIPSSEKVSFLTTASGLYQSTGNLAKALELLTLALKESVEPTVVERAVLLALAVPNKFELDDVLAVQGVKEQLGKVQGVVELFEGDEVEAIEKGKKWTAENVSLIEGAGIPGFTSETVLRKLRLIALVALCTKSETRQLEYAPIAKALAIEESEVETWVIDAVRSKLIVARISQPQSLIRIHSISSITASSRRFGPSEWQLLEKRLEQWKKSVNEARQVVEEAETVAQQGLGQQRRGGKRREEKKEKEDKEEQE.

One can recognise a PCI domain in the interval 205 to 375 (GLYQSTGNLA…SLIRIHSISS (171 aa)). The disordered stretch occupies residues 413–443 (ETVAQQGLGQQRRGGKRREEKKEKEDKEEQE). Residues 429 to 443 (RREEKKEKEDKEEQE) are compositionally biased toward basic and acidic residues.

This sequence belongs to the eIF-3 subunit M family. As to quaternary structure, component of the eukaryotic translation initiation factor 3 (eIF-3) complex.

It is found in the cytoplasm. Its function is as follows. Component of the eukaryotic translation initiation factor 3 (eIF-3) complex, which is involved in protein synthesis of a specialized repertoire of mRNAs and, together with other initiation factors, stimulates binding of mRNA and methionyl-tRNAi to the 40S ribosome. The eIF-3 complex specifically targets and initiates translation of a subset of mRNAs involved in cell proliferation. The sequence is that of Eukaryotic translation initiation factor 3 subunit M from Cryptococcus neoformans var. neoformans serotype D (strain B-3501A) (Filobasidiella neoformans).